A 387-amino-acid chain; its full sequence is MLPDGVVDVLFEDAHKQEVLRHQLIQQLISHGYQLVNPPMIEFTESLLSGASEDLKRQTFKIIDQLTGRLMGIRADITPQILRIDAHHGGDGIARYCYAGDVIHTLPSGLFGSRTPLQLGAEIFGCEYIAADIELIDVLFSMLNSLEMSAALHVDLGHVAIFKRLAELAVLSESDTEQLMQLYANKNLPELKQVCQALPLGSDFYTLARFGHDIANLLGRLSENAQQDAQIVTAIDELQRLKAHLQVQWQCAVSIDVTELSGYHYHTGIVFNGYINSETQPLVRGGRFDGMKSNQLATNQPRQATGFSMDVSRLLAHTQLDAPVIVLVDYDAFKDLGSEQLQLLLQQVASLRQQGYRVTMPLTAKDIPVGMTHRLSLVDNQWQLHAV.

Belongs to the class-II aminoacyl-tRNA synthetase family. HisZ subfamily. Heteromultimer composed of HisG and HisZ subunits.

It is found in the cytoplasm. Its pathway is amino-acid biosynthesis; L-histidine biosynthesis; L-histidine from 5-phospho-alpha-D-ribose 1-diphosphate: step 1/9. In terms of biological role, required for the first step of histidine biosynthesis. May allow the feedback regulation of ATP phosphoribosyltransferase activity by histidine. In Psychrobacter cryohalolentis (strain ATCC BAA-1226 / DSM 17306 / VKM B-2378 / K5), this protein is ATP phosphoribosyltransferase regulatory subunit.